A 506-amino-acid chain; its full sequence is Protein CYCLOPS (506 aa).

Disordered stretches follow at residues 193–223 (TVNS…LDNP) and 385–434 (KENL…RSST). Low complexity predominate over residues 202–219 (TPSQTPTFVSPSSSSTSP). The segment covering 385-394 (KENLKDDRKK) has biased composition (basic and acidic residues). Residues 415-418 (KKRR) carry the Nuclear localization signal motif. The segment covering 422–432 (SRKMAEAKERS) has biased composition (basic and acidic residues). Residues 441-506 (IQVVLKRCET…IERIVSDTNT (66 aa)) adopt a coiled-coil conformation.

It belongs to the CYCLOPS family. Highly epressed in roots. Expressed at very low levels in leaves, stems and panicles.

The protein localises to the nucleus. Its function is as follows. Involved in arbuscular mycorrhizal (AM) symbiosis. Required for fungal infection in roots and arbuscule development during AM symbiosis. The protein is Protein CYCLOPS of Oryza sativa subsp. japonica (Rice).